A 1653-amino-acid chain; its full sequence is MSSASSEPGNGDASQQPLLGLDTVIQRLEDTILSPTASREDRALTVRGEGRQASPTPVPTRIREIVAGSLSEEPPQAGVQEPTATVARVQEENELLQEELTRLGDLLAQASAERDELASRCRVVSEQLQARLETTEAQLRRSELEHSVDLEEALGRLEAAEERSTGLCQVNALLREQLEHMKKANDALGRELAGMTGSVQRLQGELELRRWAQRQTRSGGLGQPRDLLLLWRQAVVLGTDLAELRVATERGLADLQADTARTARRLHTACLNLDSNLRLSASSTASTLGQQLRDKAGEMLQLQGRWDAEKVALQARLSEQTLLVEKLTEQNEQKAKTIAALRTDLQNLVAQEDARCLELAGSSITELGEPRRPLRSPQRATSPHQGASPPHICSPATLDPALQAMRAAIERRWRREQELCLQLKSSQALVASLQEQLSESRRELWAAQKLQQERAREQAREREALRGQLEAQRLEVQQCRASCKLLGREKAALEMVVEELKGKADAADAEKQGLEAEAAELQRSLLLQAERREELALRRERSCRALETSQGRLQQLEEKVSGLREELASVREALSTAQLQRDVVESEREGLRSALARAECSNADLELLVRRLKSEGVEQRDSLAAMAALMEGLAQDKSALNHLALQLEQERDQLREQRKTLEQERARAGEQLAQAEQQLALERAERRGLQQACGRLEQRQEQLEGQAALLGREKAQLQEQVGQVTCQKQALEEQLAQSLQDQEAQMGTLQQALQGKDALSEERAQLLAKQEALERQGRLAAEEAADLRVERDSLESSLLEAQQLATKLQEQLEEEARSAGLARQALQVEMEQLQSDWEVQEMKLRQDTVRLQRQVAQQEREAQRALESQALAHREALAQLQREKETLSLTLAEEKEVARCQLEQEKELVTKSAAEREALKGEIQSLKQERDESLLQLEHKMQQALSLKETERSLLSEELSRARRTLERVQQEAQSQQEQAQATISATTEELKALQAQFEDAITAHQRETTALRESLQDLAAERGDVEREAERLRAQLTVAQEGLAALRQELQGVEESREGLHREAQEARRALSDEAREKDVLLLFNSELRATICRAEQEKASFKRSKEEKEQKLLILEEAQAALQQEASALRAHLWELEQAGGDARQELRELHRQVRTLKAENQRRSGEAHELQAQCSQEVLELRRQAAKAEAKHEGARKEVLGLQRKLAEVEAAGEAHGQRLQEHLRESRGAEQTLRAELHSVTRKLQEASGVADALQARLDQACHRIHSLEQELAQAEGARQDAEAQLGRLCSTLRRGLGLQRQSPWASPEQPGSPTKGSDSSQALPGQQGTSPPARPHSPLRWPSPTPGGRSSELMDVATVQDILRDFVQKLREAQRERDDSRIQMATLSSRLSEAECRCARAQSRVGQLQKALAEAEEGQRRVEGALSSARAARALQKEALRRLELEHLASVRAAGQEKRRLQEQLETLRQALEESRRHSQGLAKQGKLLEEQLTNLEHRCQKAEVSLEPLRQMEQETLKREEDVARLGAEKEQLDQSLNSLHQEVDGALRQNQQLQAQMTEMEQAHTQRLQDLTAQHQRDLATEAERLHGARPQATQALESQEWTHQQQVKVLEEQVASLKEQLDQEVQWRQQAHLGQAFQTGHAQRD.

A compositionally biased stretch (polar residues) spans 1–17; it reads MSSASSEPGNGDASQQP. The interval 1-57 is disordered; sequence MSSASSEPGNGDASQQPLLGLDTVIQRLEDTILSPTASREDRALTVRGEGRQASPTP. Basic and acidic residues predominate over residues 38 to 50; sequence SREDRALTVRGEG. Coiled-coil stretches lie at residues 86-145 and 310-351; these read VARV…SELE and KVAL…LVAQ. Residues 367 to 396 form a disordered region; that stretch reads LGEPRRPLRSPQRATSPHQGASPPHICSPA. A coiled-coil region spans residues 423–1215; the sequence is LKSSQALVAS…QRKLAEVEAA (793 aa). The segment at 1302–1356 is disordered; the sequence is GLQRQSPWASPEQPGSPTKGSDSSQALPGQQGTSPPARPHSPLRWPSPTPGGRSS. A compositionally biased stretch (polar residues) spans 1304 to 1335; it reads QRQSPWASPEQPGSPTKGSDSSQALPGQQGTS. Residues 1361–1570 adopt a coiled-coil conformation; it reads VATVQDILRD…QAQMTEMEQA (210 aa).

This sequence belongs to the rootletin family.

The protein is Ciliary rootlet coiled-coil protein 2 of Homo sapiens (Human).